The following is a 580-amino-acid chain: Amino-acid acetyltransferase, mitochondrial (580 aa).

In terms of domain architecture, N-acetyltransferase spans L403–D560.

Belongs to the acetyltransferase family.

Its subcellular location is the mitochondrion. It catalyses the reaction L-glutamate + acetyl-CoA = N-acetyl-L-glutamate + CoA + H(+). The protein operates within amino-acid biosynthesis; L-arginine biosynthesis; N(2)-acetyl-L-ornithine from L-glutamate: step 1/4. In terms of biological role, N-acetylglutamate synthase involved in arginine biosynthesis. The protein is Amino-acid acetyltransferase, mitochondrial (ARG2) of Candida albicans (strain SC5314 / ATCC MYA-2876) (Yeast).